A 252-amino-acid polypeptide reads, in one-letter code: Ribosomal RNA small subunit methyltransferase J (252 aa).

Residues 101-102 (RD), 117-118 (ER), 153-154 (SS), and Asp171 contribute to the S-adenosyl-L-methionine site.

The protein belongs to the methyltransferase superfamily. RsmJ family.

It is found in the cytoplasm. The catalysed reaction is guanosine(1516) in 16S rRNA + S-adenosyl-L-methionine = N(2)-methylguanosine(1516) in 16S rRNA + S-adenosyl-L-homocysteine + H(+). Specifically methylates the guanosine in position 1516 of 16S rRNA. The sequence is that of Ribosomal RNA small subunit methyltransferase J from Salmonella choleraesuis (strain SC-B67).